A 644-amino-acid polypeptide reads, in one-letter code: Chaperone protein DnaK (644 aa).

Threonine 195 carries the post-translational modification Phosphothreonine; by autocatalysis. The interval 598–644 is disordered; it reads KQAAPGAGAPGAGPGPEAAGGAQQAQAEPKKDEGVIDAEYVDVDEKK. Residues 612–624 show a composition bias toward low complexity; the sequence is GPEAAGGAQQAQA. Positions 632–644 are enriched in acidic residues; that stretch reads VIDAEYVDVDEKK.

It belongs to the heat shock protein 70 family.

In terms of biological role, acts as a chaperone. In Koribacter versatilis (strain Ellin345), this protein is Chaperone protein DnaK.